Reading from the N-terminus, the 421-residue chain is Alpha-1-antiproteinase 2 (421 aa).

The first 24 residues, 1–24 (MPSSVPWCLLLLAGLCCLVPSSLA), serve as a signal peptide directing secretion. N-linked (GlcNAc...) asparagine glycans are attached at residues Asn73, Asn110, and Asn274. The interval 376 to 395 (GTTMWEIMPISLPPDLKFNR) is RCL.

Belongs to the serpin family. N-glycosylated with carbohydrates having biantennary side chains. In terms of tissue distribution, plasma.

It localises to the secreted. Functionally, inhibitor of serine proteases. The protein is Alpha-1-antiproteinase 2 of Equus caballus (Horse).